The following is a 245-amino-acid chain: NAD-dependent protein deacylase (245 aa).

A Deacetylase sirtuin-type domain is found at 1–245; that stretch reads MEAVWESARI…RLSRAMGIDI (245 aa). Position 22–41 (22–41) interacts with NAD(+); sequence GAGISAESGIPTFRGKDGLW. Substrate is bound by residues Y66 and R69. Residue 100–103 participates in NAD(+) binding; sequence QNVD. H118 serves as the catalytic Proton acceptor. Zn(2+) contacts are provided by C126, C129, C146, and C149. NAD(+)-binding positions include 186–188, 212–214, and M241; these read GTS and NPE.

Belongs to the sirtuin family. Class III subfamily. Zn(2+) serves as cofactor.

It localises to the cytoplasm. It catalyses the reaction N(6)-acetyl-L-lysyl-[protein] + NAD(+) + H2O = 2''-O-acetyl-ADP-D-ribose + nicotinamide + L-lysyl-[protein]. It carries out the reaction N(6)-succinyl-L-lysyl-[protein] + NAD(+) + H2O = 2''-O-succinyl-ADP-D-ribose + nicotinamide + L-lysyl-[protein]. NAD-dependent lysine deacetylase and desuccinylase that specifically removes acetyl and succinyl groups on target proteins. Modulates the activities of several proteins which are inactive in their acylated form. Deacetylates the N-terminal lysine residue of Alba, the major archaeal chromatin protein and that, in turn, increases Alba's DNA binding affinity, thereby repressing transcription. This is NAD-dependent protein deacylase from Aeropyrum pernix (strain ATCC 700893 / DSM 11879 / JCM 9820 / NBRC 100138 / K1).